The chain runs to 379 residues: MTISDVPTQTLPAEGEVRLVDIGSLRLESGAVIDNVCIALQRWGELSPTRDNVVMVLHALTGDSHVTGPAGPGHSTPGWWDGMVGPGAPIDTNRWCAVATNVLGGCRGSTGPSSLARDGKPWGSRFPLISVRDQVEADMAALAALGITQVAAVVGGSMGGARALEWIVGHPDRVRSALLLAVGARATADQIGTQTTQIAAIKADPNWRNGDYHETGCKPEAGLKVARRFAHLTYRGEIELDSRFANDGQGGEDPADGGRYAIQSYLEHQGDKLLARFDAGSYVILTEALNRHDVGRGRDGIHAALRGCPVPVVVGGITSDRLYPLRLQQELADLLPGCAGLEVVDSIRGHDGFLVESEAVGELIHKTLRLAEDRSSRPW.

An AB hydrolase-1 domain is found at Asn52–Glu356. Ser157 serves as the catalytic Nucleophile. Arg227 is a binding site for substrate. Catalysis depends on residues Asp320 and His350. Asp351 is a binding site for substrate.

Belongs to the AB hydrolase superfamily. MetX family. In terms of assembly, homodimer.

The protein resides in the cytoplasm. The enzyme catalyses L-homoserine + acetyl-CoA = O-acetyl-L-homoserine + CoA. The protein operates within amino-acid biosynthesis; L-methionine biosynthesis via de novo pathway; O-acetyl-L-homoserine from L-homoserine: step 1/1. Functionally, transfers an acetyl group from acetyl-CoA to L-homoserine, forming acetyl-L-homoserine. This Mycobacterium marinum (strain ATCC BAA-535 / M) protein is Homoserine O-acetyltransferase.